The chain runs to 302 residues: Glutaminase (302 aa).

Substrate-binding residues include serine 61, asparagine 111, glutamate 155, asparagine 162, tyrosine 186, tyrosine 238, and valine 256.

Belongs to the glutaminase family. Homotetramer.

It catalyses the reaction L-glutamine + H2O = L-glutamate + NH4(+). The polypeptide is Glutaminase (Pseudomonas fluorescens (strain SBW25)).